The chain runs to 83 residues: Small ribosomal subunit protein bS20 (83 aa).

It belongs to the bacterial ribosomal protein bS20 family.

Its function is as follows. Binds directly to 16S ribosomal RNA. This chain is Small ribosomal subunit protein bS20, found in Lactobacillus delbrueckii subsp. bulgaricus (strain ATCC 11842 / DSM 20081 / BCRC 10696 / JCM 1002 / NBRC 13953 / NCIMB 11778 / NCTC 12712 / WDCM 00102 / Lb 14).